We begin with the raw amino-acid sequence, 67 residues long: MKLTCVLIAAVLLLAVCQLDSADATAYMRKDPSLRSPKRTRGCKTKGTWCWASRECCLKDCLFVCVY.

Positions 1 to 24 (MKLTCVLIAAVLLLAVCQLDSADA) are cleaved as a signal peptide. A propeptide spanning residues 25-37 (TAYMRKDPSLRSP) is cleaved from the precursor. 3 disulfide bridges follow: C43-C57, C50-C61, and C56-C65.

It belongs to the conotoxin O1 superfamily. As to expression, expressed by the venom duct.

It is found in the secreted. The protein is Conotoxin Cl6.10 of Californiconus californicus (California cone).